We begin with the raw amino-acid sequence, 457 residues long: Charged multivesicular body protein 7 (457 aa).

2 coiled-coil regions span residues 234–266 and 331–382; these read QLQCSEKLLEERVEALGHEAEKCKQQAKSLLKE and TVER…EKSV. Disordered stretches follow at residues 381–401 and 435–457; these read SVPENDLFPAVPTHPITPPRK and LTVSDKGLPRESVSPQRRLEPAQ.

It belongs to the SNF7 family.

The protein resides in the cytoplasm. It localises to the nucleus envelope. ESCRT-III-like protein required to recruit the ESCRT-III complex to the nuclear envelope during late anaphase. Together with SPAST, the ESCRT-III complex promotes nuclear envelope sealing and mitotic spindle disassembly during late anaphase. Plays a role in the endosomal sorting pathway. In Danio rerio (Zebrafish), this protein is Charged multivesicular body protein 7 (chmp7).